A 205-amino-acid chain; its full sequence is Small ribosomal subunit protein uS4 (205 aa).

Positions 18–45 (NIWGRPKSPVNRREYGPGQHGQRRKGKL) are disordered. The S4 RNA-binding domain occupies 94–157 (RRLDTVVYRA…KQLAFVLEAS (64 aa)).

It belongs to the universal ribosomal protein uS4 family. In terms of assembly, part of the 30S ribosomal subunit. Contacts protein S5. The interaction surface between S4 and S5 is involved in control of translational fidelity.

Functionally, one of the primary rRNA binding proteins, it binds directly to 16S rRNA where it nucleates assembly of the body of the 30S subunit. In terms of biological role, with S5 and S12 plays an important role in translational accuracy. The sequence is that of Small ribosomal subunit protein uS4 from Rhodopseudomonas palustris (strain BisA53).